The sequence spans 250 residues: MFPVELDNVTVAYHKKPVLQDISLQVPEGKLIGIIGPNGAGKSTLIKTILGLVPRASGDISIYGKDYKDQRTRIGYVPQRGSVDWDFPTSPLDVVLMGRYGRIGLLKRPKKADVEMAKAALTKVGMHDYAKRQISQLSGGQQQRVFLARALCQNADIYFMDEPFAGVDAATERAIMTLLAELKEKGKTVLVVHHDLQTAEDYFDWILLLHLRKIAFGPTENVFTIENLQKTYGGRLTFLKDKVLAEGHKE.

The ABC transporter domain occupies 4–236 (VELDNVTVAY…NLQKTYGGRL (233 aa)). 36–43 (GPNGAGKS) contributes to the ATP binding site.

It belongs to the ABC transporter superfamily. As to quaternary structure, the complex is probably composed of two ATP-binding proteins (MntB), two transmembrane proteins (MntC and MntD) and a solute-binding protein (MntA).

The protein localises to the cell membrane. Functionally, probably part of the ABC transporter complex MntABCD involved in manganese import. Probably responsible for energy coupling to the transport system. This chain is Manganese transport system ATP-binding protein MntB, found in Bacillus subtilis (strain 168).